A 428-amino-acid chain; its full sequence is Sialidase-3 (428 aa).

The short motif at 24–27 (YRIP) is the FRIP motif element. The substrate site is built by Arg25 and Arg45. Asp50 serves as the catalytic Proton acceptor. Residues 129-140 (ICSQDAGYSWSD) form a BNR 1 repeat. Substrate contacts are provided by Tyr179 and Tyr181. The stretch at 203–214 (IYSDDLGATWHH) is one BNR 2 repeat. Substrate is bound by residues Glu225 and Arg245. The stretch at 254-265 (ALSIDHGECFQK) is one BNR 3 repeat. At Ser314 the chain carries Phosphoserine. Arg341 is a binding site for substrate. The active-site Nucleophile is Tyr371. The active site involves Glu388.

Belongs to the glycosyl hydrolase 33 family. In terms of assembly, interacts with CAV1; this interaction enhances NEU3 sialidase activity within caveola. Interacts with EGFR; this interaction mediates desialylation of EGFR and enhances downstream signaling. Palmitoylated; may regulate intracellular trafficking and anchorage to plasma membrane and endomembranes. In terms of tissue distribution, expressed in brain.

The protein localises to the cell membrane. It localises to the membrane. It is found in the caveola. Its subcellular location is the early endosome membrane. The protein resides in the recycling endosome membrane. The protein localises to the lysosome membrane. It carries out the reaction Hydrolysis of alpha-(2-&gt;3)-, alpha-(2-&gt;6)-, alpha-(2-&gt;8)- glycosidic linkages of terminal sialic acid residues in oligosaccharides, glycoproteins, glycolipids, colominic acid and synthetic substrates.. The enzyme catalyses a ganglioside GD1a + H2O = a ganglioside GM1 + N-acetylneuraminate. It catalyses the reaction a ganglioside GD1a (d18:1(4E)) + H2O = a ganglioside GM1 (d18:1(4E)) + N-acetylneuraminate. The catalysed reaction is a ganglioside GD1b + H2O = a ganglioside GM1 + N-acetylneuraminate. It carries out the reaction a ganglioside GD1b (d18:1(4E)) + H2O = a ganglioside GM1 (d18:1(4E)) + N-acetylneuraminate. The enzyme catalyses a ganglioside GD3 + H2O = a ganglioside GM3 + N-acetylneuraminate. It catalyses the reaction a ganglioside GD3 (d18:1(4E)) + H2O = a ganglioside GM3 (d18:1(4E)) + N-acetylneuraminate. The catalysed reaction is a ganglioside GM3 + H2O = a beta-D-galactosyl-(1-&gt;4)-beta-D-glucosyl-(1&lt;-&gt;1)-ceramide + N-acetylneuraminate. It carries out the reaction a ganglioside GM1 + H2O = a ganglioside GA1 + N-acetylneuraminate. The enzyme catalyses a ganglioside GM1 (d18:1(4E)) + H2O = a ganglioside GA1 (d18:1(4E)) + N-acetylneuraminate. It catalyses the reaction a ganglioside GM2 (d18:1(4E)) + H2O = a ganglioside GA2 (d18:1(4E)) + N-acetylneuraminate. The catalysed reaction is a ganglioside GM3 (d18:1(4E)) + H2O = a beta-D-Gal-(1-&gt;4)-beta-D-Glc-(1&lt;-&gt;1)-Cer(d18:1(4E)) + N-acetylneuraminate. It carries out the reaction a ganglioside GT1b + H2O = a ganglioside GD1b + N-acetylneuraminate. Its function is as follows. Exo-alpha-sialidase that catalyzes the hydrolytic cleavage of the terminal sialic acid (N-acetylneuraminic acid, Neu5Ac) of a glycan moiety in the catabolism of glycolipids, glycoproteins and oligosacharides. Displays high catalytic efficiency for gangliosides including alpha-(2-&gt;3)-sialylated GD1a and GM3 and alpha-(2-&gt;8)-sialylated GD3. Plays a role in the regulation of transmembrane signaling through the modulation of ganglioside content of the lipid bilayer and by direct interaction with signaling receptors, such as EGFR. Desialylates EGFR and activates downstream signaling in proliferating cells. Contributes to clathrin-mediated endocytosis by regulating sorting of endocytosed receptors to early and recycling endosomes. The protein is Sialidase-3 (NEU3) of Bos taurus (Bovine).